The primary structure comprises 40 residues: Putative protein FAM86JP (40 aa).

The segment at 1-40 (MPGAFSQNSSKRRAVLPRSHRVAGRGPAEAGCLPGAPAGS) is disordered. Residues 10-23 (SKRRAVLPRSHRVA) show a composition bias toward basic residues.

This chain is Putative protein FAM86JP, found in Homo sapiens (Human).